The chain runs to 431 residues: Intraflagellar transport protein 38 (431 aa).

Residues 177–218 adopt a coiled-coil conformation; the sequence is SAAVQQRIKNLAAECNTLQEEVTTNKREKAKLEEQITQKKQS. The interval 346 to 431 is disordered; it reads INTNAEIPDD…EELDPDNIEF (86 aa). The span at 352–370 shows a compositional bias: acidic residues; sequence IPDDESYSYSYEEEEEEEQ. Residues 384-405 show a composition bias toward basic and acidic residues; sequence PETHSNGEKHRGLDELSHKSNE. Residues 420–431 show a composition bias toward acidic residues; that stretch reads GGEELDPDNIEF.

The protein belongs to the CLUAP1 family.

The protein resides in the cell projection. Its subcellular location is the cilium. The protein localises to the flagellum. It is found in the cytoplasm. It localises to the cytoskeleton. The protein resides in the flagellum axoneme. Its subcellular location is the flagellum basal body. In terms of biological role, component of the intraflagellar transport complex B (IFT-B) involved in flagellar assembly. This Giardia intestinalis (strain ATCC 50803 / WB clone C6) (Giardia lamblia) protein is Intraflagellar transport protein 38.